The following is a 102-amino-acid chain: Large ribosomal subunit protein bL28 (102 aa).

The span at 1–20 (MSNSCDLTGHGWQNGNMVSH) shows a compositional bias: polar residues. The segment at 1-27 (MSNSCDLTGHGWQNGNMVSHSNRKTKK) is disordered.

This sequence belongs to the bacterial ribosomal protein bL28 family.

The sequence is that of Large ribosomal subunit protein bL28 from Neorickettsia sennetsu (strain ATCC VR-367 / Miyayama) (Ehrlichia sennetsu).